Consider the following 139-residue polypeptide: Hydrogenase maturation factor HypA (139 aa).

Histidine 2 is a Ni(2+) binding site. Zn(2+) contacts are provided by cysteine 73, cysteine 76, cysteine 110, and cysteine 113.

This sequence belongs to the HypA/HybF family.

Its function is as follows. Involved in the maturation of [NiFe] hydrogenases. Required for nickel insertion into the metal center of the hydrogenase. In Thermococcus gammatolerans (strain DSM 15229 / JCM 11827 / EJ3), this protein is Hydrogenase maturation factor HypA.